The sequence spans 183 residues: Potassium-transporting ATPase KdpC subunit (183 aa).

Residues 10-30 (ASLLVLSLVTGVAYPLLVTGI) form a helical membrane-spanning segment.

It belongs to the KdpC family. The system is composed of three essential subunits: KdpA, KdpB and KdpC.

It localises to the cell inner membrane. Its function is as follows. Part of the high-affinity ATP-driven potassium transport (or Kdp) system, which catalyzes the hydrolysis of ATP coupled with the electrogenic transport of potassium into the cytoplasm. This subunit acts as a catalytic chaperone that increases the ATP-binding affinity of the ATP-hydrolyzing subunit KdpB by the formation of a transient KdpB/KdpC/ATP ternary complex. This is Potassium-transporting ATPase KdpC subunit from Pseudomonas aeruginosa (strain ATCC 15692 / DSM 22644 / CIP 104116 / JCM 14847 / LMG 12228 / 1C / PRS 101 / PAO1).